Reading from the N-terminus, the 94-residue chain is Co-chaperonin GroES (94 aa).

This sequence belongs to the GroES chaperonin family. In terms of assembly, heptamer of 7 subunits arranged in a ring. Interacts with the chaperonin GroEL.

Its subcellular location is the cytoplasm. Its function is as follows. Together with the chaperonin GroEL, plays an essential role in assisting protein folding. The GroEL-GroES system forms a nano-cage that allows encapsulation of the non-native substrate proteins and provides a physical environment optimized to promote and accelerate protein folding. GroES binds to the apical surface of the GroEL ring, thereby capping the opening of the GroEL channel. This chain is Co-chaperonin GroES, found in Streptococcus pneumoniae (strain ATCC 700669 / Spain 23F-1).